Reading from the N-terminus, the 200-residue chain is MASHQDQASYRAGETKAHTEEKAGQVMGASKDKASEAKDRASEAAGHAAGKGQDTKEATKEKAQAAKERASETAQAAKDKTSSTSQAARDKAAESKDQTGGFLGEKTEQAKQKAAETAGAAKQKTAETAQYTKDSAIAGKDKTGSVLQQASEQVKSTVVGAKDAVMSTLGMTEDEAGTDDGANKDTSATAAATETTARDH.

Disordered stretches follow at residues 1-145 (MASH…KTGS) and 172-200 (TEDE…ARDH). Composition is skewed to basic and acidic residues over residues 13-23 (GETKAHTEEKA), 30-42 (SKDK…DRAS), 53-81 (QDTK…KDKT), 88-97 (ARDKAAESKD), and 105-114 (EKTEQAKQKA). Residues 52–81 (GQDTKEATKEKAQAAKERASETAQAAKDKT) adopt a coiled-coil conformation. Composition is skewed to low complexity over residues 115–130 (AETA…ETAQ) and 186–200 (TSAT…ARDH).

This sequence belongs to the LEA type 4 family.

Functionally, involved in response to stress. This chain is Late embryogenesis abundant protein 19, found in Oryza sativa subsp. japonica (Rice).